A 533-amino-acid chain; its full sequence is Probable bifunctional tRNA threonylcarbamoyladenosine biosynthesis protein (533 aa).

The kae1 stretch occupies residues 1–329; that stretch reads MTRVLGIEGT…FRPDEVPVSW (329 aa). Fe cation-binding residues include His113 and His117. Residues 134–138, Asp166, Gly179, Glu183, and Asn262 each bind L-threonylcarbamoyladenylate; that span reads NASGA. Residue Asp290 participates in Fe cation binding. Residues 338 to 533 enclose the Protein kinase domain; it reads PVPTDERRQG…REIETRGRYQ (196 aa). Residues 345 to 352 and Lys363 each bind ATP; that span reads RQGAEAVV. Asp452 serves as the catalytic Proton acceptor; for kinase activity.

In the N-terminal section; belongs to the KAE1 / TsaD family. The protein in the C-terminal section; belongs to the protein kinase superfamily. Tyr protein kinase family. BUD32 subfamily. In terms of assembly, component of the KEOPS complex that consists of Kae1, Bud32, Cgi121 and Pcc1; the whole complex dimerizes. The cofactor is Fe(2+).

Its subcellular location is the cytoplasm. The catalysed reaction is L-seryl-[protein] + ATP = O-phospho-L-seryl-[protein] + ADP + H(+). It catalyses the reaction L-threonyl-[protein] + ATP = O-phospho-L-threonyl-[protein] + ADP + H(+). The enzyme catalyses L-threonylcarbamoyladenylate + adenosine(37) in tRNA = N(6)-L-threonylcarbamoyladenosine(37) in tRNA + AMP + H(+). In terms of biological role, required for the formation of a threonylcarbamoyl group on adenosine at position 37 (t(6)A37) in tRNAs that read codons beginning with adenine. Is a component of the KEOPS complex that is probably involved in the transfer of the threonylcarbamoyl moiety of threonylcarbamoyl-AMP (TC-AMP) to the N6 group of A37. The Kae1 domain likely plays a direct catalytic role in this reaction. The Bud32 domain probably displays kinase activity that regulates Kae1 function. The protein is Probable bifunctional tRNA threonylcarbamoyladenosine biosynthesis protein of Natronomonas pharaonis (strain ATCC 35678 / DSM 2160 / CIP 103997 / JCM 8858 / NBRC 14720 / NCIMB 2260 / Gabara) (Halobacterium pharaonis).